Here is a 547-residue protein sequence, read N- to C-terminus: MGKTLTIVMLVFVSMAGWMFGADTGSIGGITNMRDFQSRFADRYNPVTDTYSYSSARQGLITGMVNVGSMTGCILSSPLMDRIGKRVSIMFWTIVYLIGIILQVTAVPSWVQIMVAKIWTGLAIGALSVLAPGFQSEVAPATLRGTIVTTYQLAVTGGIFIAACINMGTHKLHKTAQWRVSMGINLLWGIIMFIGISFLPESPRYLIAIGKDEEALDIMCKNNVLPREHEIIQTEYHVIKTDCEAEMAGGPATWGDILGADIRYRTFLGLGVMSLQQLTGDNYYFYYGFEVFEGTGMNSPYLSALILDAVNFGCTFGGLFVLEFFGRRMPLIIGGVWQSITFFIYAAVGNRALTRKNGTSNHRAGAVMIVFSCLFIFSFAQTWGPAAYVIVGESYPIRYRSKCAAVATTGNWLWGFLITFFTPFISDSIGFKYGYIFAACNLCAACIIFLFAHETKGLTLEEINELYLSGAKPWMPRPENLGQAAKQQQEVLEKSRGVQGESAAHLENVDNEGMEDTSSNDITSSTSSSEGRAKPESNYVDEQDRYA.

The transit peptide at 1–21 (MGKTLTIVMLVFVSMAGWMFG) directs the protein to the mitochondrion. Residues 22-86 (ADTGSIGGIT…SPLMDRIGKR (65 aa)) lie on the Mitochondrial intermembrane side of the membrane. A helical membrane pass occupies residues 87 to 107 (VSIMFWTIVYLIGIILQVTAV). At 108–112 (PSWVQ) the chain is on the cytoplasmic side. A helical transmembrane segment spans residues 113 to 133 (IMVAKIWTGLAIGALSVLAPG). Residues 134–144 (FQSEVAPATLR) lie on the Mitochondrial intermembrane side of the membrane. A helical transmembrane segment spans residues 145-165 (GTIVTTYQLAVTGGIFIAACI). Residues 166–179 (NMGTHKLHKTAQWR) are Cytoplasmic-facing. Residues 180 to 200 (VSMGINLLWGIIMFIGISFLP) traverse the membrane as a helical segment. Residues 201–304 (ESPRYLIAIG…TGMNSPYLSA (104 aa)) are Mitochondrial intermembrane-facing. A helical membrane pass occupies residues 305–325 (LILDAVNFGCTFGGLFVLEFF). Residues 326-328 (GRR) lie on the Cytoplasmic side of the membrane. A helical membrane pass occupies residues 329 to 349 (MPLIIGGVWQSITFFIYAAVG). Residues 350–363 (NRALTRKNGTSNHR) lie on the Mitochondrial intermembrane side of the membrane. The chain crosses the membrane as a helical span at residues 364–384 (AGAVMIVFSCLFIFSFAQTWG). The Cytoplasmic portion of the chain corresponds to 385-404 (PAAYVIVGESYPIRYRSKCA). Residues 405-425 (AVATTGNWLWGFLITFFTPFI) form a helical membrane-spanning segment. The Mitochondrial intermembrane portion of the chain corresponds to 426 to 432 (SDSIGFK). Residues 433 to 453 (YGYIFAACNLCAACIIFLFAH) traverse the membrane as a helical segment. Topologically, residues 454–547 (ETKGLTLEEI…NYVDEQDRYA (94 aa)) are cytoplasmic. Residues 482–547 (GQAAKQQQEV…NYVDEQDRYA (66 aa)) are disordered. Over residues 517-529 (TSSNDITSSTSSS) the composition is skewed to low complexity. Residue Ser519 is modified to Phosphoserine. 2 positions are modified to phosphothreonine: Thr523 and Thr526. A phosphoserine mark is found at Ser527, Ser528, Ser529, and Ser537.

The protein belongs to the major facilitator superfamily. Sugar transporter (TC 2.A.1.1) family.

It localises to the mitochondrion membrane. This Schizosaccharomyces pombe (strain 972 / ATCC 24843) (Fission yeast) protein is Probable high-affinity hexose transporter ght8, mitochondrial (ght8).